The following is a 2213-amino-acid chain: Sortilin-related receptor (2213 aa).

An N-terminal signal peptide occupies residues 1-28 (MATRSSRRESRLPFLFTLVALLPPGALC). The propeptide at 29–81 (EVWTRTLHGGRAPLPQERGFRVVQGDPRELRLWERGDARGASRADEKPLRRRR) is removed in mature form. The short motif at 63 to 65 (RGD) is the Cell attachment site element. The Lumenal portion of the chain corresponds to 82-2136 (SAALQPEPIK…MQAARSTDVA (2055 aa)). N99 carries an N-linked (GlcNAc...) asparagine glycan. Position 114 is a phosphoserine (S114). Residues 136–147 (YVSYDYGKSFNK) form a BNR 1 repeat. N158 is a glycosylation site (N-linked (GlcNAc...) asparagine). The stretch at 232–243 (WKSDDFGQTWIM) is one BNR 2 repeat. N-linked (GlcNAc...) asparagine glycans are attached at residues N368 and N430. 3 BNR repeats span residues 441-452 (VITFDKGGTWEF), 521-532 (YISSSAGARWRE), and 562-573 (KYSTNEGETWKA). N616, N674, N817, and N870 each carry an N-linked (GlcNAc...) asparagine glycan. 5 LDL-receptor class B repeats span residues 799–842 (NCLY…EPLS), 843–886 (QLLY…VPQE), 887–929 (GIMF…SVDD), 930–971 (QWIY…FKNE), and 972–1012 (IYWD…FYKG). The EGF-like domain maps to 1025-1071 (CSLLCLPRANNSKSCRCPDGVASSVLPSGDLMCDCPKGYELKNNTCV). N-linked (GlcNAc...) asparagine glycosylation is found at N1034 and N1067. LDL-receptor class A domains lie at 1075–1113 (DTCL…NCPT), 1114–1154 (TICD…HCEM), 1155–1193 (HQCR…NCTA), 1196–1235 (HTCE…ANCE), 1237–1271 (KCNG…QHCE), 1272–1316 (PLCT…GCSR), 1322–1360 (KVCD…NCEN), 1365–1404 (PNCS…DCGD), and 1416–1454 (STCL…ACPS). Cystine bridges form between C1077–C1089, C1084–C1102, C1096–C1111, C1116–C1130, C1124–C1143, C1137–C1152, C1157–C1169, C1164–C1182, C1176–C1191, C1198–C1210, C1205–C1223, C1217–C1234, C1238–C1248, C1243–C1261, C1255–C1270, C1274–C1288, C1282–C1301, C1295–C1314, C1324–C1336, C1331–C1349, and C1343–C1358. A glycan (N-linked (GlcNAc...) asparagine) is linked at N1163. A glycan (N-linked (GlcNAc...) asparagine) is linked at N1190. N-linked (GlcNAc...) asparagine glycosylation is present at N1245. N1366 carries an N-linked (GlcNAc...) asparagine glycan. 6 cysteine pairs are disulfide-bonded: C1367–C1380, C1375–C1393, C1387–C1402, C1418–C1430, C1425–C1443, and C1437–C1452. The N-linked (GlcNAc...) asparagine glycan is linked to N1457. LDL-receptor class A domains follow at residues 1468 to 1507 (GRCD…NCPT) and 1511 to 1550 (LTCM…ACSD). 6 cysteine pairs are disulfide-bonded: C1470-C1483, C1477-C1496, C1490-C1505, C1513-C1526, C1520-C1539, and C1533-C1548. 6 consecutive Fibronectin type-III domains span residues 1556–1648 (KVQN…TPEG), 1652–1744 (APQN…TVKG), 1748–1843 (PPPN…VRPP), 1842–1926 (PPAP…VVKM), 1933–2028 (PPRH…APDA), and 2029–2117 (LKII…LYDE). N1569, N1607, N1705, N1732, N1808, N1853, N1893, N1985, N2009, N2053, N2068, N2075, and N2091 each carry an N-linked (GlcNAc...) asparagine glycan. A helical membrane pass occupies residues 2137–2157 (AVVVPILFLILLSLGVGFAIL). At 2158–2213 (YTKHRRLQSSFTAFANSHYSSRLGSAIFSSGDDLGEDDEDAPMITGFSDDVPMVIA) the chain is on the cytoplasmic side. The short motif at 2160–2163 (KHRR) is the Potential nuclear localization signal for the C-terminal fragment generated by PSEN1 element. The Endocytosis signal signature appears at 2171-2176 (FANSHY). The interval 2189–2213 (DDLGEDDEDAPMITGFSDDVPMVIA) is required for efficient Golgi apparatus - endosome sorting. Residues 2200 to 2213 (MITGFSDDVPMVIA) form a required for interaction with GGA1 and GGA2 region. At S2205 the chain carries Phosphoserine; by ROCK2. The DXXLL motif involved in the interaction with GGA1 motif lies at 2207–2211 (DVPMV).

It belongs to the VPS10-related sortilin family. SORL1 subfamily. After maturation cleavage, interacts (via N-terminus) with its own propeptide; this interaction prevents interaction with other ligands, including CRLF1, GDNF, GFRA1, IL6 and IL6R. Interacts (via N-terminal ectodomain) with APP, forming a 1:1 stoichiometric complex; this interaction retains APP in the trans-Golgi network and reduces processing into soluble APP-alpha and amyloid-beta peptides. Also interacts with APP C-terminal fragment C99 and with Abeta40. Interacts with beta-secretase BACE1/BACE; this interaction may affect BACE1-binding to APP and hence reduce BACE1-dependent APP cleavage. Interacts with LRPAP1/RAP. Interacts (via C-terminal cytosolic domain) with GGA1 and GGA2 (via N-terminal VHS domain). Interacts with PACS1. May interact (via the N-terminal ectodomain) with the morphogenetic neuropeptide, also called head activator or HA; this interaction is impaired in the presence of propeptide. Interacts with neurotensin/NTS. Interacts (via the N-terminal ectodomain) with PDGFB homodimer. Interacts (via N-terminal ectodomain) with the uPA receptor PLAUR. Interacts with uPA/PLAU and PAI1/SERPINE1, either individually or in complex with each other, leading to endocytosis. Also interacts with PAI1/SERPINE1 in complex with tPA/PLAT. Interacts (via C-terminus) with AP-1 and AP-2 complexes. Interacts with BMPR1A and BMPR1B. Interacts with lipoprotein lipase LPL; this interaction is optimal in slightly acidic conditions. Interacts (via N-terminal ectodomain) with GDNF (via propeptide) and GDNF receptor alpha-1/GFRA1, either individually or in complex with each other. The interaction with GDNF occurs mostly intracellularly. Also interacts with other GDNF receptor alpha family members, including GFRA2, GFRA3 and GFRA4. Interacts with the insulin receptor INSR; this interaction strongly increases the surface exposure of INSR. Interacts (via cytosolic C-terminus) with STK39/SPAK. Interacts (via N-terminal ectodomain) with the heterodimeric complex CRLF1-CLC; within this complex, the interaction is mediated predominantly by the CRLF1 moiety. Interacts with CNTFR, as well as with the tripartite signaling complex formed by CRLF1, CLC and CNTFR. Interacts (via N-terminal ectodomain) with IL6; this interaction leads to IL6 internalization and lysosomal degradation. Binding of SOLRL1 secreted N-terminal ectodomain to IL6 may increase IL6 trans signaling. Interacts with secreted IL6R; this interaction leads to IL6R internalization. Also interacts with transmembrane IL6R; this interaction does not affect subcellular location. Interacts with APOE. Interacts with apolipoprotein E-rich beta-VLDL. Interacts with APOA5; this interaction leads to APOA5 internalization and is abolished by heparin. Interaction with APOA5 results in enhanced binding to chylomicrons. Interacts with ROCK2. Interacts (via cytosolic C-terminus) with PPP3CB/calcineurin A beta. Interacts with NTRK2/TRKB; this interaction facilitates NTRK2 trafficking between synaptic plasma membranes, postsynaptic densities and cell soma, hence positively regulates BDNF signaling. Interacts (via cytosolic C-terminus) with HSPA12A in an ADP-dependent manner; this interaction affects SORL1 internalization and subcellular localization. Interacts (via N-terminal ectodomain) with ERBB2/HER2. Within the Golgi apparatus, the propeptide may be cleaved off by FURIN or a furin-like protease. After cleavage, the propeptide interacts with the mature protein N-terminus, preventing the association with other ligands. At the cell surface, partially subjected to proteolytic shedding that releases the ectodomain in the extracellular milieu. The shedding may be catalyzed by ADAM17/TACE. Following shedding, PSEN1/presenilin-1 cleaves the remaining transmembrane fragment and catalyzes the release of a C-terminal fragment in the cytosol and of a soluble N-terminal beta fragment in the extracellular milieu. The C-terminal cytosolic fragment localizes to the nucleus. Post-translationally, phosphorylation at Ser-2205 facilitates the interaction with GGA1. In terms of tissue distribution, expressed in brain, in particular the hippocampus, dentate gyrus, and cerebral cortex (at protein level). Also detected in liver, adrenal glands, pancreas and testis. Expressed in smooth muscle cells, predominantly during proliferation.

The protein localises to the golgi apparatus membrane. Its subcellular location is the golgi apparatus. It localises to the trans-Golgi network membrane. It is found in the endosome membrane. The protein resides in the early endosome membrane. The protein localises to the recycling endosome membrane. Its subcellular location is the endoplasmic reticulum membrane. It localises to the endosome. It is found in the multivesicular body membrane. The protein resides in the cell membrane. The protein localises to the cytoplasmic vesicle. Its subcellular location is the secretory vesicle membrane. It localises to the secreted. In terms of biological role, sorting receptor that directs several proteins to their correct location within the cell. Along with AP-1 complex, involved Golgi apparatus - endosome sorting. Sorting receptor for APP, regulating its intracellular trafficking and processing into amyloidogenic-beta peptides. Retains APP in the trans-Golgi network, hence preventing its transit through late endosomes where amyloid beta peptides Abeta40 and Abeta42 are generated. May also sort newly produced amyloid-beta peptides to lysosomes for catabolism. Does not affect APP trafficking from the endoplasmic reticulum to Golgi compartments. Sorting receptor for the BDNF receptor NTRK2/TRKB that facilitates NTRK2 trafficking between synaptic plasma membranes, postsynaptic densities and cell soma, hence positively regulates BDNF signaling by controlling the intracellular location of its receptor. Sorting receptor for GDNF that promotes GDNF regulated, but not constitutive secretion. Sorting receptor for the GDNF-GFRA1 complex, directing it from the cell surface to endosomes. GDNF is then targeted to lysosomes and degraded, while its receptor GFRA1 recycles back to the cell membrane, resulting in a GDNF clearance pathway. The SORL1-GFRA1 complex further targets RET for endocytosis, but not for degradation, affecting GDNF-induced neurotrophic activities. Sorting receptor for ERBB2/HER2. Regulates ERBB2 subcellular distribution by promoting its recycling after internalization from endosomes back to the plasma membrane, hence stimulating phosphoinositide 3-kinase (PI3K)-dependent ERBB2 signaling. Sorting receptor for lipoprotein lipase LPL. Promotes LPL localization to endosomes and later to the lysosomes, leading to degradation of newly synthesized LPL. Potential sorting receptor for APOA5, inducing APOA5 internalization to early endosomes, then to late endosomes, wherefrom a portion is sent to lysosomes and degradation, another portion is sorted to the trans-Golgi network. Sorting receptor for the insulin receptor INSR. Promotes recycling of internalized INSR via the Golgi apparatus back to the cell surface, thereby preventing lysosomal INSR catabolism, increasing INSR cell surface expression and strengthening insulin signal reception in adipose tissue. Does not affect INSR internalization. Plays a role in renal ion homeostasis, controlling the phospho-regulation of SLC12A1/NKCC2 by STK39/SPAK kinase and PPP3CB/calcineurin A beta phosphatase, possibly through intracellular sorting of STK39 and PPP3CB. Stimulates, via the N-terminal ectodomain, the proliferation and migration of smooth muscle cells, possibly by increasing cell surface expression of the urokinase receptor uPAR/PLAUR. This may promote extracellular matrix proteolysis and hence facilitate cell migration. By acting on the migration of intimal smooth muscle cells, may accelerate intimal thickening following vascular injury. Promotes adhesion of monocytes. Stimulates proliferation and migration of monocytes/macrophages. Through its action on intimal smooth muscle cells and macrophages, may accelerate intimal thickening and macrophage foam cell formation in the process of atherosclerosis. Regulates hypoxia-enhanced adhesion of hematopoietic stem and progenitor cells to the bone marrow stromal cells via a PLAUR-mediated pathway. This function is mediated by the N-terminal ectodomain. Metabolic regulator, which functions to maintain the adequate balance between lipid storage and oxidation in response to changing environmental conditions, such as temperature and diet. The N-terminal ectodomain negatively regulates adipose tissue energy expenditure, acting through the inhibition the BMP/Smad pathway. May regulate signaling by the heterodimeric neurotrophic cytokine CLCF1-CRLF1 bound to the CNTFR receptor by promoting the endocytosis of the tripartite complex CLCF1-CRLF1-CNTFR and lysosomal degradation. May regulate IL6 signaling, decreasing cis signaling, possibly by interfering with IL6-binding to membrane-bound IL6R, while up-regulating trans signaling via soluble IL6R. The polypeptide is Sortilin-related receptor (SORL1) (Oryctolagus cuniculus (Rabbit)).